A 127-amino-acid chain; its full sequence is Small ribosomal subunit protein uS11 (127 aa).

The protein belongs to the universal ribosomal protein uS11 family. In terms of assembly, part of the 30S ribosomal subunit. Interacts with proteins S7 and S18. Binds to IF-3.

Located on the platform of the 30S subunit, it bridges several disparate RNA helices of the 16S rRNA. Forms part of the Shine-Dalgarno cleft in the 70S ribosome. The protein is Small ribosomal subunit protein uS11 of Rickettsia canadensis (strain McKiel).